The primary structure comprises 59 residues: Large ribosomal subunit protein bL32 (59 aa).

Belongs to the bacterial ribosomal protein bL32 family.

This Anaeromyxobacter dehalogenans (strain 2CP-C) protein is Large ribosomal subunit protein bL32.